A 111-amino-acid chain; its full sequence is MAQARTEFSKVAAPRKLEEMYAQRGDLFPYLLAVLVLLTLVSVFHVWSRVRVVDLNLEVAEVARQLKVAQEEQNRLKLEVASLKTPARIEAVAKGELGMALPTDQQVVVVK.

The Cytoplasmic segment spans residues 1 to 26 (MAQARTEFSKVAAPRKLEEMYAQRGD). A helical transmembrane segment spans residues 27 to 47 (LFPYLLAVLVLLTLVSVFHVW). The Periplasmic segment spans residues 48–111 (SRVRVVDLNL…PTDQQVVVVK (64 aa)). The stretch at 51–85 (RVVDLNLEVAEVARQLKVAQEEQNRLKLEVASLKT) forms a coiled coil.

It belongs to the FtsL family.

The protein resides in the cell inner membrane. Its function is as follows. Essential cell division protein. This Geobacter sulfurreducens (strain ATCC 51573 / DSM 12127 / PCA) protein is Cell division protein FtsL.